The primary structure comprises 153 residues: Ribosomal RNA large subunit methyltransferase H (153 aa).

S-adenosyl-L-methionine contacts are provided by residues Leu-71, Gly-102, and 121-126 (LSRMTL).

It belongs to the RNA methyltransferase RlmH family. Homodimer.

The protein resides in the cytoplasm. The catalysed reaction is pseudouridine(1915) in 23S rRNA + S-adenosyl-L-methionine = N(3)-methylpseudouridine(1915) in 23S rRNA + S-adenosyl-L-homocysteine + H(+). Functionally, specifically methylates the pseudouridine at position 1915 (m3Psi1915) in 23S rRNA. This is Ribosomal RNA large subunit methyltransferase H from Anaeromyxobacter sp. (strain Fw109-5).